The chain runs to 1314 residues: Phosphoribosylformylglycinamidine synthase (1314 aa).

Residues 307–318 (GAATGAGGEIRD) and alanine 674 each bind ATP. Aspartate 675, glutamate 714, asparagine 718, and aspartate 880 together coordinate Mg(2+). An ATP-binding site is contributed by serine 882. One can recognise a Glutamine amidotransferase type-1 domain in the interval 1063–1314 (IAILREQGVN…LFAGARKALG (252 aa)). Cysteine 1156 functions as the Nucleophile in the catalytic mechanism. Catalysis depends on residues histidine 1279 and glutamate 1281.

The protein in the N-terminal section; belongs to the FGAMS family. Monomer.

The protein resides in the cytoplasm. It catalyses the reaction N(2)-formyl-N(1)-(5-phospho-beta-D-ribosyl)glycinamide + L-glutamine + ATP + H2O = 2-formamido-N(1)-(5-O-phospho-beta-D-ribosyl)acetamidine + L-glutamate + ADP + phosphate + H(+). It functions in the pathway purine metabolism; IMP biosynthesis via de novo pathway; 5-amino-1-(5-phospho-D-ribosyl)imidazole from N(2)-formyl-N(1)-(5-phospho-D-ribosyl)glycinamide: step 1/2. Its function is as follows. Phosphoribosylformylglycinamidine synthase involved in the purines biosynthetic pathway. Catalyzes the ATP-dependent conversion of formylglycinamide ribonucleotide (FGAR) and glutamine to yield formylglycinamidine ribonucleotide (FGAM) and glutamate. This Neisseria gonorrhoeae (strain ATCC 700825 / FA 1090) protein is Phosphoribosylformylglycinamidine synthase.